The following is a 339-amino-acid chain: Coproporphyrin III ferrochelatase (339 aa).

Positions 52 and 121 each coordinate Fe-coproporphyrin III. Positions 181 and 264 each coordinate Fe(2+).

This sequence belongs to the ferrochelatase family.

It is found in the cytoplasm. The catalysed reaction is Fe-coproporphyrin III + 2 H(+) = coproporphyrin III + Fe(2+). The protein operates within porphyrin-containing compound metabolism; protoheme biosynthesis. Involved in coproporphyrin-dependent heme b biosynthesis. Catalyzes the insertion of ferrous iron into coproporphyrin III to form Fe-coproporphyrin III. The protein is Coproporphyrin III ferrochelatase of Mycolicibacterium vanbaalenii (strain DSM 7251 / JCM 13017 / BCRC 16820 / KCTC 9966 / NRRL B-24157 / PYR-1) (Mycobacterium vanbaalenii).